We begin with the raw amino-acid sequence, 451 residues long: Chromosomal replication initiator protein DnaA (451 aa).

Positions 1–72 are domain I, interacts with DnaA modulators; that stretch reads MQSIEDIWQE…ANILQEITGR (72 aa). The domain II stretch occupies residues 72–108; it reads RLFDVRFIDGEQEENFEYTVIKPNPALDEDGVEIGKH. Residues 109-325 are domain III, AAA+ region; the sequence is MLNPRYVFDT…GALIRVVAYS (217 aa). Residues Gly-153, Gly-155, Lys-156, and Thr-157 each coordinate ATP. The tract at residues 326–451 is domain IV, binds dsDNA; the sequence is SLVNKDITAG…KNLRKAQNMF (126 aa).

The protein belongs to the DnaA family. Oligomerizes as a right-handed, spiral filament on DNA at oriC.

The protein resides in the cytoplasm. Plays an essential role in the initiation and regulation of chromosomal replication. ATP-DnaA binds to the origin of replication (oriC) to initiate formation of the DNA replication initiation complex once per cell cycle. Binds the DnaA box (a 9 base pair repeat at the origin) and separates the double-stranded (ds)DNA. Forms a right-handed helical filament on oriC DNA; dsDNA binds to the exterior of the filament while single-stranded (ss)DNA is stabiized in the filament's interior. The ATP-DnaA-oriC complex binds and stabilizes one strand of the AT-rich DNA unwinding element (DUE), permitting loading of DNA polymerase. After initiation quickly degrades to an ADP-DnaA complex that is not apt for DNA replication. Binds acidic phospholipids. This is Chromosomal replication initiator protein DnaA from Listeria monocytogenes serotype 4b (strain CLIP80459).